The chain runs to 297 residues: uncharacterized protein (297 aa).

It belongs to the glycosyltransferase 2 family.

This is an uncharacterized protein from Mycoplasma genitalium (strain ATCC 33530 / DSM 19775 / NCTC 10195 / G37) (Mycoplasmoides genitalium).